A 188-amino-acid polypeptide reads, in one-letter code: Elongation factor P (188 aa).

It belongs to the elongation factor P family.

It localises to the cytoplasm. The protein operates within protein biosynthesis; polypeptide chain elongation. Involved in peptide bond synthesis. Stimulates efficient translation and peptide-bond synthesis on native or reconstituted 70S ribosomes in vitro. Probably functions indirectly by altering the affinity of the ribosome for aminoacyl-tRNA, thus increasing their reactivity as acceptors for peptidyl transferase. The polypeptide is Elongation factor P (Flavobacterium johnsoniae (strain ATCC 17061 / DSM 2064 / JCM 8514 / BCRC 14874 / CCUG 350202 / NBRC 14942 / NCIMB 11054 / UW101) (Cytophaga johnsonae)).